A 335-amino-acid polypeptide reads, in one-letter code: Aliphatic sulfonates import ATP-binding protein SsuB (335 aa).

The interval 48-71 is disordered; the sequence is PFASGGAFGRAPRDDDDDRRGAGD. In terms of domain architecture, ABC transporter spans 74–293; sequence VRLTRVSKRY…ARASAAFAEL (220 aa). 106–113 contributes to the ATP binding site; sequence GRSGCGKS.

Belongs to the ABC transporter superfamily. Aliphatic sulfonates importer (TC 3.A.1.17.2) family. As to quaternary structure, the complex is composed of two ATP-binding proteins (SsuB), two transmembrane proteins (SsuC) and a solute-binding protein (SsuA).

Its subcellular location is the cell inner membrane. The enzyme catalyses ATP + H2O + aliphatic sulfonate-[sulfonate-binding protein]Side 1 = ADP + phosphate + aliphatic sulfonateSide 2 + [sulfonate-binding protein]Side 1.. Its function is as follows. Part of the ABC transporter complex SsuABC involved in aliphatic sulfonates import. Responsible for energy coupling to the transport system. The chain is Aliphatic sulfonates import ATP-binding protein SsuB from Burkholderia thailandensis (strain ATCC 700388 / DSM 13276 / CCUG 48851 / CIP 106301 / E264).